Here is a 512-residue protein sequence, read N- to C-terminus: MEISVASVTISVVLAVVSWWIWRTLQWVWFKPKMLEHYLRRQGLAGTPYTPLVGDLKKNFTMLSEARSKPLKLTDDISPRVVPYPLQMFKTYGRTYFTWFGPIPTITIMDPEQIKEVFNKVYDFQKPHTFPLATIIAKGLANYDGDKWAKHRRIINPAFHIEKIKNMVPAFHQSCREVVGEWDQLVSDKGSSCEVDVWPGLVSMTADVISRTAFGSSYKEGQRIFELQAELAQLIIQAFRKAFIPGYSYLPTKSNRRMKAAAREIQVILRGIVNKRLRAREAGEAPSDDLLGILLESNLRQTEGNGMSTEDLMEECKLFYFAGQETTSVLLVWTMVLLSQHQDWQARAREEVKQVFGDKEPDAEGLNQLKVMTMILYEVLRLYPPVTQLTRAIHKELKLGDLTLPGGVQISLPILLVQHDIELWGNDAAEFNPDRFKDGLSKATKSQVSFFPFAWGPRICIGQNFALLEAKMAMALILRRFSFEISPSYVHAPYTVITIHPQFGAQLIMHKL.

The chain crosses the membrane as a helical span at residues 2–22 (EISVASVTISVVLAVVSWWIW). Cys-460 is a binding site for heme.

The protein belongs to the cytochrome P450 family. Requires heme as cofactor.

Its subcellular location is the membrane. This is Cytochrome P450 72A15 (CYP72A15) from Arabidopsis thaliana (Mouse-ear cress).